The primary structure comprises 134 residues: Transcription antitermination protein NusB (134 aa).

This sequence belongs to the NusB family.

In terms of biological role, involved in transcription antitermination. Required for transcription of ribosomal RNA (rRNA) genes. Binds specifically to the boxA antiterminator sequence of the ribosomal RNA (rrn) operons. This chain is Transcription antitermination protein NusB, found in Halothermothrix orenii (strain H 168 / OCM 544 / DSM 9562).